We begin with the raw amino-acid sequence, 216 residues long: Uracil phosphoribosyltransferase (216 aa).

Residue 30–34 (KTLVR) coordinates GTP. Residues R80, R105, and 140 to 148 (DPMIATAST) each bind 5-phospho-alpha-D-ribose 1-diphosphate. Uracil is bound by residues I203 and 208–210 (GDA). Position 209 (D209) interacts with 5-phospho-alpha-D-ribose 1-diphosphate.

The protein belongs to the UPRTase family. It depends on Mg(2+) as a cofactor.

It catalyses the reaction UMP + diphosphate = 5-phospho-alpha-D-ribose 1-diphosphate + uracil. It participates in pyrimidine metabolism; UMP biosynthesis via salvage pathway; UMP from uracil: step 1/1. Allosterically activated by GTP. Catalyzes the conversion of uracil and 5-phospho-alpha-D-ribose 1-diphosphate (PRPP) to UMP and diphosphate. The polypeptide is Uracil phosphoribosyltransferase (Sulfurisphaera tokodaii (strain DSM 16993 / JCM 10545 / NBRC 100140 / 7) (Sulfolobus tokodaii)).